A 482-amino-acid chain; its full sequence is MFEHEQKIMIDRIVKELEENNFAIFAGAGLSAPAGYVNWKELLRPLSIELNLDIDKETDLVSLAQYYVNENHGRNRLTERLIDEVGVAREPTPNHKILAKLPISTYWTTNYDDLIEKALDNEGKIADKKFTKNHLSQTKKGRSAVVYKMHGDASLPDQAIITKDQYESYPLHFAPFVTALSGDLVSKTFLFLGFSFNDPNLDYILSRIRIHFEQNQRQHYCIFRKVNRADYSNDEDFSYNLLKQQFVIKDLARFSIKVVLIDAWNDLTRILEEITKRFRCKNVFLSGSAHEFGSWGQTATELFLSKLGEVLIQEGFKITSGLGLGIGNAFISGAIKEIYNRKYTKIDDYLTMKVFPQFVADPTERKNIWTAWRKDLLSQTGIALFFMGNKIIKDPESGKQTIVLADGMDEEFHIAHELGLKLIPIGASGYKAKELFNQIISDFDHYYPNSSPKFREAFEKLNEEVDEPVKLLSKIHDVIKLI.

The Deacetylase sirtuin-type domain occupies 3-281; sequence EHEQKIMIDR…EEITKRFRCK (279 aa). D112 and H150 together coordinate NAD(+). H150 acts as the Proton acceptor in catalysis. Residues 282–482 are SLOG (STALD) domain; it reads NVFLSGSAHE…SKIHDVIKLI (201 aa). 3'cADPR contacts are provided by G287, S288, L324, F355, R373, K390, G407, and E411.

Belongs to the soluble Thoeris ThsA family. As to quaternary structure, homotetramer in solution.

The enzyme catalyses NAD(+) + H2O = ADP-D-ribose + nicotinamide + H(+). With respect to regulation, in vivo probably activated by a cyclic ADP-D-ribose generated by ThsB (might be 3'cADPR). Its function is as follows. NAD(+) hydrolyzing component (NADase) of the Thoeris antiviral defense system, composed of ThsA and ThsB (maybe J591_1492). As purified, has NADase activity that is not activated by any tested cADPR isomers; binds 3'cADPR better than 2'cADPR. It was suggested the purified protein is already in a fully active state. Upon activation binds and hydrolyzes NAD(+), leading to cell death and inhibition of phage replication. The chain is NAD(+) hydrolase ThsA from Acinetobacter baumannii (strain 532279).